Reading from the N-terminus, the 409-residue chain is Rho-GTPase-activating protein BAG7 (409 aa).

The segment covering 1 to 26 (MFNMNLLSTPSSEEGSPQNRSSSMSS) has biased composition (polar residues). A disordered region spans residues 1 to 32 (MFNMNLLSTPSSEEGSPQNRSSSMSSVEGKKD). The region spanning 50–257 (VSLEESLKVA…FLILHASDII (208 aa)) is the Rho-GAP domain. Residues 362-409 (KLLGNVGNSSNTGIKDPTERVPRGEHKTKHKQRQSWLRRLTSPSRTQP) are disordered. The span at 377–386 (DPTERVPRGE) shows a compositional bias: basic and acidic residues.

As to quaternary structure, interacts with RHO1.

Its function is as follows. Acts in signal transduction. Activates RHO1. This Saccharomyces cerevisiae (strain ATCC 204508 / S288c) (Baker's yeast) protein is Rho-GTPase-activating protein BAG7 (BAG7).